A 165-amino-acid chain; its full sequence is Protein eva-1 homolog B (165 aa).

The chain crosses the membrane as a helical span at residues 29 to 49; that stretch reads GLYFVLGVCFGLLLTLCLLVI. Disordered stretches follow at residues 57–109 and 143–165; these read PRPR…GPLN and LLGTGTLGPSPTATGTLGRMHYY. A compositionally biased stretch (acidic residues) spans 74–84; sequence EPEDDDEDEED. Residues Thr-85, Thr-148, and Thr-158 each carry the phosphothreonine modification.

Belongs to the EVA1 family.

It is found in the membrane. This Homo sapiens (Human) protein is Protein eva-1 homolog B (EVA1B).